The following is a 217-amino-acid chain: MFALVVPPYPVNVAVQTISPTKYCFQFENRVQAKEFTLFLTDIQKFTPGYNAAIYLAYQPFTDWKYLGFINSNKPSIICKIPSETLDNNNNNNNNNNNNNNINNGFINNINSIIPTEIIQIGISIETDLEIQSKPPIEQQQQQQQQQQQQQNTSSTSINNFIKTEEFKQVAFKLCDNLVNYILSFSTSNNTVPSSSINKWYENFQKKLKNDQLDFLK.

Belongs to the OPI10 family.

This chain is Protein OPI10 homolog, found in Dictyostelium discoideum (Social amoeba).